The following is a 630-amino-acid chain: Plastin-1 (630 aa).

Met-1 is subject to N-acetylmethionine. EF-hand domains lie at 11–46 and 51–86; these read EELEELQEAFNKIDIDNSGYVSDYELQDLFKEASLP and KVREIVEKILVVADNNKDGKISFEEFVSLMQELKSK. 10 residues coordinate Ca(2+): Asp-24, Asp-26, Ser-28, Tyr-30, Glu-35, Asp-64, Asn-66, Asp-68, Lys-70, and Glu-75. Actin-binding stretches follow at residues 108–381 and 382–626; these read TSSI…CLHK and PDNN…GKGL. Calponin-homology (CH) domains are found at residues 122–238, 266–377, 396–505, and 517–626; these read EEEK…KVGL, LSPE…NTYP, SKEE…RRYT, and KVTD…GKGL.

As to quaternary structure, monomer. Phosphorylated. In the inner ear, it is expressed in the organ of Corti. Abundant in the utricle (at protein level).

It is found in the cytoplasm. The protein resides in the cell projection. The protein localises to the stereocilium. Actin-bundling protein. In the inner ear, it is required for stereocilia formation. Mediates liquid packing of actin filaments that is necessary for stereocilia to grow to their proper dimensions. The polypeptide is Plastin-1 (Pls1) (Mus musculus (Mouse)).